Reading from the N-terminus, the 250-residue chain is Small ribosomal subunit protein uS3 (250 aa).

Residues 39–107 (VREFLTKKLK…PAQVSINEID (69 aa)) enclose the KH type-2 domain. The tract at residues 214 to 250 (VMNPAPQEERPAKRGRGRGEGQERRGRRSDRAADKGE) is disordered. Positions 220–250 (QEERPAKRGRGRGEGQERRGRRSDRAADKGE) are enriched in basic and acidic residues.

This sequence belongs to the universal ribosomal protein uS3 family. In terms of assembly, part of the 30S ribosomal subunit. Forms a tight complex with proteins S10 and S14.

Its function is as follows. Binds the lower part of the 30S subunit head. Binds mRNA in the 70S ribosome, positioning it for translation. The sequence is that of Small ribosomal subunit protein uS3 from Acinetobacter baylyi (strain ATCC 33305 / BD413 / ADP1).